The sequence spans 251 residues: Seminal metalloprotease 1 (251 aa).

Residues 1 to 18 (MFPQIWGVIFLFTPTVFS) form the signal peptide. Positions 44-248 (NGIVNQIYHW…RKLNKMYRCP (205 aa)) constitute a Peptidase M12A domain. N-linked (GlcNAc...) asparagine glycans are attached at residues asparagine 55 and asparagine 120. Disulfide bonds link cysteine 87-cysteine 247 and cysteine 111-cysteine 136. Histidine 144 provides a ligand contact to Zn(2+). Residue glutamate 145 is part of the active site. Residues histidine 148 and histidine 154 each coordinate Zn(2+). Asparagine 185 carries N-linked (GlcNAc...) asparagine glycosylation.

It depends on Zn(2+) as a cofactor. In terms of processing, undergoes cleavage in the male during mating with a cleaved product detected in the ejaculatory duct and/or bulb of males by 8-10 minutes after the start of mating. Further cleavage occurs in the mated female. May undergo cleavage in a two-step process where it is first cleaved by Sems, making it susceptible to activational cleavage which may be carried out by another protease or by autocleavage. As to expression, produced in the male accessory glands and secreted into seminal fluid. In mated females, confined to the reproductive tract and also detected in eggs laid by mated females (at protein level).

It localises to the secreted. In terms of biological role, seminal fluid metalloprotease which is transferred to females during mating and is required for processing of two other seminal fluid proteins Acp26Aa and Acp36DE in mated females. The protein is Seminal metalloprotease 1 of Drosophila melanogaster (Fruit fly).